Consider the following 364-residue polypeptide: WAT1-related protein At3g30340 (364 aa).

Transmembrane regions (helical) follow at residues W9–F29, V41–L61, S76–L96, T102–F122, L138–A158, W183–V203, Y215–I235, V251–W271, G277–F297, and I304–W324. EamA domains are found at residues N26–T152 and I195–L323.

It belongs to the drug/metabolite transporter (DMT) superfamily. Plant drug/metabolite exporter (P-DME) (TC 2.A.7.4) family.

It is found in the membrane. The polypeptide is WAT1-related protein At3g30340 (Arabidopsis thaliana (Mouse-ear cress)).